Here is a 506-residue protein sequence, read N- to C-terminus: Apolipoprotein N-acyltransferase (506 aa).

6 helical membrane passes run 26–46 (FAPYQIWLVALITPALLLILI), 66–86 (FASGISWVYVSIAGFGGMPLA), 89–109 (LFLMGALIAYLAIYPALFTWS), 113–133 (FFAKATLLNLLLAAPALWLIA), 166–186 (GVELLTLLLLVGAGAIAYAVI), and 192–212 (MLLIPTVLLSTGYGLSHWDWV). The region spanning 225 to 471 (IQGNVDQNLK…TAVLRAELTP (247 aa)) is the CN hydrolase domain. The active-site Proton acceptor is the glutamate 264. Lysine 330 is an active-site residue. Cysteine 382 (nucleophile) is an active-site residue. The helical transmembrane segment at 479–499 (HQLGSWPLYIWVALSLALAWW) threads the bilayer.

This sequence belongs to the CN hydrolase family. Apolipoprotein N-acyltransferase subfamily.

It localises to the cell inner membrane. It catalyses the reaction N-terminal S-1,2-diacyl-sn-glyceryl-L-cysteinyl-[lipoprotein] + a glycerophospholipid = N-acyl-S-1,2-diacyl-sn-glyceryl-L-cysteinyl-[lipoprotein] + a 2-acyl-sn-glycero-3-phospholipid + H(+). Its pathway is protein modification; lipoprotein biosynthesis (N-acyl transfer). Its function is as follows. Catalyzes the phospholipid dependent N-acylation of the N-terminal cysteine of apolipoprotein, the last step in lipoprotein maturation. This Vibrio vulnificus (strain CMCP6) protein is Apolipoprotein N-acyltransferase.